A 232-amino-acid chain; its full sequence is Ubiquinone biosynthesis O-methyltransferase (232 aa).

S-adenosyl-L-methionine contacts are provided by R36, G55, D76, and L120.

The protein belongs to the methyltransferase superfamily. UbiG/COQ3 family.

It catalyses the reaction a 3-demethylubiquinol + S-adenosyl-L-methionine = a ubiquinol + S-adenosyl-L-homocysteine + H(+). The enzyme catalyses a 3-(all-trans-polyprenyl)benzene-1,2-diol + S-adenosyl-L-methionine = a 2-methoxy-6-(all-trans-polyprenyl)phenol + S-adenosyl-L-homocysteine + H(+). It participates in cofactor biosynthesis; ubiquinone biosynthesis. O-methyltransferase that catalyzes the 2 O-methylation steps in the ubiquinone biosynthetic pathway. In Pseudomonas aeruginosa (strain LESB58), this protein is Ubiquinone biosynthesis O-methyltransferase.